The primary structure comprises 73 residues: Large ribosomal subunit protein bL31 (73 aa).

The protein belongs to the bacterial ribosomal protein bL31 family. Type A subfamily. In terms of assembly, part of the 50S ribosomal subunit.

Its function is as follows. Binds the 23S rRNA. The protein is Large ribosomal subunit protein bL31 of Brucella abortus (strain 2308).